The following is a 475-amino-acid chain: UDP-N-acetylmuramate--L-alanine ligase (475 aa).

Position 114 to 120 (114 to 120 (GTHGKTT)) interacts with ATP.

Belongs to the MurCDEF family.

It localises to the cytoplasm. The enzyme catalyses UDP-N-acetyl-alpha-D-muramate + L-alanine + ATP = UDP-N-acetyl-alpha-D-muramoyl-L-alanine + ADP + phosphate + H(+). The protein operates within cell wall biogenesis; peptidoglycan biosynthesis. Its function is as follows. Cell wall formation. The chain is UDP-N-acetylmuramate--L-alanine ligase from Bartonella bacilliformis (strain ATCC 35685 / KC583 / Herrer 020/F12,63).